The chain runs to 503 residues: Long-chain-fatty-acid--CoA ligase FadD13 (503 aa).

It belongs to the ATP-dependent AMP-binding enzyme family. Homodimer.

It is found in the cell membrane. It catalyses the reaction a long-chain fatty acid + ATP + CoA = a long-chain fatty acyl-CoA + AMP + diphosphate. The protein operates within lipid metabolism; fatty acid biosynthesis. Required for maintaining the appropriate mycolic acid composition and permeability of the envelope on its exposure to acidic pH. Catalyzes the activation of long-chain fatty acids as acyl-coenzyme A (acyl-CoA), which are then transferred to the multifunctional polyketide synthase (PKS) type III for further chain extension. The sequence is that of Long-chain-fatty-acid--CoA ligase FadD13 (fadD13) from Mycobacterium tuberculosis (strain CDC 1551 / Oshkosh).